Reading from the N-terminus, the 452-residue chain is Mitochondrial distribution and morphology protein 10 (452 aa).

It belongs to the MDM10 family. Component of the ER-mitochondria encounter structure (ERMES) or MDM complex, composed of MMM1, MDM10, MDM12 and MDM34. Associates with the mitochondrial outer membrane sorting assembly machinery SAM(core) complex.

Its subcellular location is the mitochondrion outer membrane. In terms of biological role, component of the ERMES/MDM complex, which serves as a molecular tether to connect the endoplasmic reticulum and mitochondria. Components of this complex are involved in the control of mitochondrial shape and protein biogenesis and may function in phospholipid exchange. MDM10 is involved in the late assembly steps of the general translocase of the mitochondrial outer membrane (TOM complex). Functions in the TOM40-specific route of the assembly of outer membrane beta-barrel proteins, including the association of TOM40 with the receptor TOM22 and small TOM proteins. Can associate with the SAM(core) complex as well as the MDM12-MMM1 complex, both involved in late steps of the major beta-barrel assembly pathway, that is responsible for biogenesis of all outer membrane beta-barrel proteins. May act as a switch that shuttles between both complexes and channels precursor proteins into the TOM40-specific pathway. Plays a role in mitochondrial morphology and in the inheritance of mitochondria. This Kluyveromyces lactis (strain ATCC 8585 / CBS 2359 / DSM 70799 / NBRC 1267 / NRRL Y-1140 / WM37) (Yeast) protein is Mitochondrial distribution and morphology protein 10.